The following is a 61-amino-acid chain: MSRTSLEVKAQRKPKFSARAYNRCPVCGRPRAYMRKFGLCRICFRNMALRGELPGVRKSSW.

4 residues coordinate Zn(2+): Cys-24, Cys-27, Cys-40, and Cys-43.

The protein belongs to the universal ribosomal protein uS14 family. Zinc-binding uS14 subfamily. In terms of assembly, part of the 30S ribosomal subunit. Contacts proteins S3 and S10. The cofactor is Zn(2+).

In terms of biological role, binds 16S rRNA, required for the assembly of 30S particles and may also be responsible for determining the conformation of the 16S rRNA at the A site. This chain is Small ribosomal subunit protein uS14, found in Nitratidesulfovibrio vulgaris (strain DSM 19637 / Miyazaki F) (Desulfovibrio vulgaris).